We begin with the raw amino-acid sequence, 473 residues long: Microtubule-binding protein TANGLED (473 aa).

The tract at residues 1–132 is required for binding to TAN and location to the cortical division sites (CDS) during cytokinesis; that stretch reads MVARTPQKQR…VTRDIVDAIA (132 aa). Disordered stretches follow at residues 131–218 and 290–354; these read IAPK…ENSF and ASKF…LSTA. Composition is skewed to polar residues over residues 205–216 and 307–329; these read ISPQVKGNNGEN and PTRN…TRTV.

As to quaternary structure, interacts with POK1. In terms of tissue distribution, strongly expressed in flower buds and root tips.

It localises to the nucleus. Its subcellular location is the nucleolus. It is found in the cytoplasm. The protein resides in the cytoskeleton. The protein localises to the phragmoplast. In terms of biological role, is required for spatial control cell division during plant development. Through an association with microtubules, acts both for the positioning of cytoskeletal arrays that establish planes of cell division during prophase and for spatial guidance of expanding phragmoplasts toward preestablished cortical division sites (CDS) during cytokinesis. In Arabidopsis thaliana (Mouse-ear cress), this protein is Microtubule-binding protein TANGLED (TAN).